The primary structure comprises 318 residues: MITDEKKDERLSIILEPGQIEASAVTPPFLHLPAANLFELRAARLEQLAEGNALGDYLRLIARLCRIQQQLVDNPPGGMPVAEARQRLCMDHGLPPLAADSLVREGPWLVWLQALLEHLSGETRGPMGEALQVLRGSDDNQRKGWGIALLAGQYDGVPAALVPFLGAALQAAWSSWLLALPAHQLKPAGSLAQCPACGSPAMAGVVRNRGKHNGLRYLACSLCACEWHVVRVKCVYCESSKDLRYTSLEDDRHAPGKAPLRAECCPGCDSYLKQNYLENDAAAEPLADDLASLALDIRLDGEGFHRLAPNLMLAPGGG.

Belongs to the FdhE family.

It localises to the cytoplasm. Functionally, necessary for formate dehydrogenase activity. The polypeptide is Protein FdhE homolog (Pseudomonas putida (strain ATCC 47054 / DSM 6125 / CFBP 8728 / NCIMB 11950 / KT2440)).